A 714-amino-acid chain; its full sequence is Polyribonucleotide nucleotidyltransferase (714 aa).

Positions 488 and 494 each coordinate Mg(2+). The KH domain maps to 555 to 614 (PRIEVMNIPVDKIREVIGSGGKVIREIVEKTGAKINIDDDGTVKIASASGKEIEAARKWI). Residues 624–692 (GQVYEGTVVK…ERGKVRLSMK (69 aa)) enclose the S1 motif domain.

It belongs to the polyribonucleotide nucleotidyltransferase family. It depends on Mg(2+) as a cofactor.

The protein localises to the cytoplasm. It catalyses the reaction RNA(n+1) + phosphate = RNA(n) + a ribonucleoside 5'-diphosphate. In terms of biological role, involved in mRNA degradation. Catalyzes the phosphorolysis of single-stranded polyribonucleotides processively in the 3'- to 5'-direction. The chain is Polyribonucleotide nucleotidyltransferase from Sinorhizobium medicae (strain WSM419) (Ensifer medicae).